The primary structure comprises 652 residues: DNA ligase (652 aa).

NAD(+)-binding positions include 29 to 33 (DAEYD), 78 to 79 (SL), and Glu-107. Lys-109 (N6-AMP-lysine intermediate) is an active-site residue. NAD(+) contacts are provided by Arg-130, Glu-164, Lys-278, and Lys-302. 4 residues coordinate Zn(2+): Cys-395, Cys-398, Cys-413, and Cys-418. The region spanning 577–652 (ADDAILSGKT…VKDEAWLLDL (76 aa)) is the BRCT domain.

Belongs to the NAD-dependent DNA ligase family. LigA subfamily. It depends on Mg(2+) as a cofactor. The cofactor is Mn(2+).

The catalysed reaction is NAD(+) + (deoxyribonucleotide)n-3'-hydroxyl + 5'-phospho-(deoxyribonucleotide)m = (deoxyribonucleotide)n+m + AMP + beta-nicotinamide D-nucleotide.. In terms of biological role, DNA ligase that catalyzes the formation of phosphodiester linkages between 5'-phosphoryl and 3'-hydroxyl groups in double-stranded DNA using NAD as a coenzyme and as the energy source for the reaction. It is essential for DNA replication and repair of damaged DNA. This chain is DNA ligase, found in Streptococcus thermophilus (strain CNRZ 1066).